Here is a 644-residue protein sequence, read N- to C-terminus: Threonine--tRNA ligase (644 aa).

The TGS domain occupies 1-61 (MNVSIEGQML…DGTTTIEPVY (61 aa)). Residues 241 to 532 (DHRKLGQQLD…LIEQYAGAFP (292 aa)) form a catalytic region. Residues Cys333, His384, and His509 each coordinate Zn(2+).

Belongs to the class-II aminoacyl-tRNA synthetase family. As to quaternary structure, homodimer. It depends on Zn(2+) as a cofactor.

The protein localises to the cytoplasm. It carries out the reaction tRNA(Thr) + L-threonine + ATP = L-threonyl-tRNA(Thr) + AMP + diphosphate + H(+). Its function is as follows. Catalyzes the attachment of threonine to tRNA(Thr) in a two-step reaction: L-threonine is first activated by ATP to form Thr-AMP and then transferred to the acceptor end of tRNA(Thr). Also edits incorrectly charged L-seryl-tRNA(Thr). This is Threonine--tRNA ligase from Nitratidesulfovibrio vulgaris (strain ATCC 29579 / DSM 644 / CCUG 34227 / NCIMB 8303 / VKM B-1760 / Hildenborough) (Desulfovibrio vulgaris).